Reading from the N-terminus, the 118-residue chain is C-X-C motif chemokine 17 (118 aa).

A signal peptide spans 1–22; it reads MKVLISSLLLLLPLMLMSVVSS. Cystine bridges form between cysteine 74-cysteine 102 and cysteine 76-cysteine 109.

The protein belongs to the intercrine alpha (chemokine CxC) family.

It localises to the secreted. Chemokine that acts as a chemoattractant for monocytes, macrophages and dendritic cells. Plays a role in angiogenesis and possibly in the development of tumors. Acts as an anti-inflammatory in the stomach. May play a role in the innate defense against infections. Activates the C-X-C chemokine receptor GPR35 to induce a rapid and transient rise in the level of intracellular calcium ions. The chain is C-X-C motif chemokine 17 (CXCL17) from Bos taurus (Bovine).